Consider the following 520-residue polypeptide: Bifunctional purine biosynthesis protein PurH (520 aa).

The MGS-like domain occupies 1-146 (MAPVALLSVS…KNHADVAVLT (146 aa)).

The protein belongs to the PurH family.

It catalyses the reaction (6R)-10-formyltetrahydrofolate + 5-amino-1-(5-phospho-beta-D-ribosyl)imidazole-4-carboxamide = 5-formamido-1-(5-phospho-D-ribosyl)imidazole-4-carboxamide + (6S)-5,6,7,8-tetrahydrofolate. It carries out the reaction IMP + H2O = 5-formamido-1-(5-phospho-D-ribosyl)imidazole-4-carboxamide. The protein operates within purine metabolism; IMP biosynthesis via de novo pathway; 5-formamido-1-(5-phospho-D-ribosyl)imidazole-4-carboxamide from 5-amino-1-(5-phospho-D-ribosyl)imidazole-4-carboxamide (10-formyl THF route): step 1/1. It participates in purine metabolism; IMP biosynthesis via de novo pathway; IMP from 5-formamido-1-(5-phospho-D-ribosyl)imidazole-4-carboxamide: step 1/1. The chain is Bifunctional purine biosynthesis protein PurH from Synechococcus sp. (strain CC9902).